A 470-amino-acid polypeptide reads, in one-letter code: Uronate isomerase (470 aa).

This sequence belongs to the metallo-dependent hydrolases superfamily. Uronate isomerase family.

It catalyses the reaction D-glucuronate = D-fructuronate. It carries out the reaction aldehydo-D-galacturonate = keto-D-tagaturonate. It participates in carbohydrate metabolism; pentose and glucuronate interconversion. The polypeptide is Uronate isomerase (Escherichia coli O157:H7 (strain EC4115 / EHEC)).